A 306-amino-acid chain; its full sequence is Ornithine carbamoyltransferase (306 aa).

Carbamoyl phosphate-binding positions include 53 to 56 (STRT), Gln80, Arg104, and 131 to 134 (HPCQ). L-ornithine is bound by residues Asn162, Asp220, and 224–225 (SM). Residues 260–261 (CL) and Arg288 contribute to the carbamoyl phosphate site.

This sequence belongs to the aspartate/ornithine carbamoyltransferase superfamily. OTCase family.

It localises to the cytoplasm. The catalysed reaction is carbamoyl phosphate + L-ornithine = L-citrulline + phosphate + H(+). It participates in amino-acid biosynthesis; L-arginine biosynthesis; L-arginine from L-ornithine and carbamoyl phosphate: step 1/3. Its function is as follows. Reversibly catalyzes the transfer of the carbamoyl group from carbamoyl phosphate (CP) to the N(epsilon) atom of ornithine (ORN) to produce L-citrulline. This chain is Ornithine carbamoyltransferase, found in Methylobacillus flagellatus (strain ATCC 51484 / DSM 6875 / VKM B-1610 / KT).